Here is a 473-residue protein sequence, read N- to C-terminus: DNA (cytosine-5)-methyltransferase DRM1A (473 aa).

The UBA 1 domain occupies 20-61; sequence SAPSALVAYFLGMGFSREMVFRAIKEIGDTDSEQILELLLTY. A compositionally biased stretch (acidic residues) spans 84–101; it reads EEEDEEEDVNWDEDDTVD. Residues 84-115 form a disordered region; that stretch reads EEEDEEEDVNWDEDDTVDNFDRATYSDGSGDE. Positions 120–140 constitute a UBA 2 domain; that stretch reads EMSEKDEKIKSLVSMGFPEDE. The SAM-dependent MTase DRM-type domain occupies 204–431; the sequence is VHRNLPDQAL…DSVKTIMASI (228 aa).

Belongs to the class I-like SAM-binding methyltransferase superfamily. DRM-methyltransferase family.

Its subcellular location is the nucleus. It catalyses the reaction a 2'-deoxycytidine in DNA + S-adenosyl-L-methionine = a 5-methyl-2'-deoxycytidine in DNA + S-adenosyl-L-homocysteine + H(+). In terms of biological role, involved in de novo DNA methylation. Involved in RNA-directed DNA methylation (RdDM). The protein is DNA (cytosine-5)-methyltransferase DRM1A of Oryza sativa subsp. japonica (Rice).